We begin with the raw amino-acid sequence, 180 residues long: Cell division protein ZapC (180 aa).

The protein belongs to the ZapC family. As to quaternary structure, interacts directly with FtsZ.

Its subcellular location is the cytoplasm. Its function is as follows. Contributes to the efficiency of the cell division process by stabilizing the polymeric form of the cell division protein FtsZ. Acts by promoting interactions between FtsZ protofilaments and suppressing the GTPase activity of FtsZ. This is Cell division protein ZapC from Vibrio vulnificus (strain CMCP6).